The primary structure comprises 317 residues: Homoserine O-succinyltransferase (317 aa).

Residue Cys142 is the Acyl-thioester intermediate of the active site. Lys163 and Ser192 together coordinate substrate. His235 serves as the catalytic Proton acceptor. Glu237 is a catalytic residue. Arg249 is a binding site for substrate.

The protein belongs to the MetA family.

It is found in the cytoplasm. It carries out the reaction L-homoserine + succinyl-CoA = O-succinyl-L-homoserine + CoA. It functions in the pathway amino-acid biosynthesis; L-methionine biosynthesis via de novo pathway; O-succinyl-L-homoserine from L-homoserine: step 1/1. Functionally, transfers a succinyl group from succinyl-CoA to L-homoserine, forming succinyl-L-homoserine. This chain is Homoserine O-succinyltransferase, found in Aeromonas hydrophila subsp. hydrophila (strain ATCC 7966 / DSM 30187 / BCRC 13018 / CCUG 14551 / JCM 1027 / KCTC 2358 / NCIMB 9240 / NCTC 8049).